Consider the following 132-residue polypeptide: Small ribosomal subunit protein uS11 (132 aa).

It belongs to the universal ribosomal protein uS11 family. In terms of assembly, part of the 30S ribosomal subunit. Interacts with proteins S7 and S18. Binds to IF-3.

In terms of biological role, located on the platform of the 30S subunit, it bridges several disparate RNA helices of the 16S rRNA. Forms part of the Shine-Dalgarno cleft in the 70S ribosome. This is Small ribosomal subunit protein uS11 from Clostridium botulinum (strain 657 / Type Ba4).